We begin with the raw amino-acid sequence, 196 residues long: [1-hydroxy-2-(trimethylamino)ethyl]phosphonate dioxygenase (glycine-betaine-forming) (196 aa).

Y30 serves as a coordination point for [(1R)-1-hydroxy-2-(trimethylamino)ethyl]phosphonate. Residues Y30, H40, H64, and D65 each coordinate Fe cation. An HD domain is found at 37–156 (MAEHMLQGAT…VAEFEKNPNL (120 aa)). Residues H68, H86, H109, K113, S131, S134, and R163 each contribute to the [(1R)-1-hydroxy-2-(trimethylamino)ethyl]phosphonate site. The Fe cation site is built by H86 and H109. Position 166 (D166) interacts with Fe cation.

Fe cation serves as cofactor.

It carries out the reaction [(1R)-1-hydroxy-2-(trimethylamino)ethyl]phosphonate + O2 = glycine betaine + phosphate + 2 H(+). Involved in the degradation of the naturally occurring organophosphonate 2-(trimethylammonio)ethylphosphonate (TMAEP). Catalyzes the O(2)-dependent cleavage of (R)-1-hydroxy-2-(trimethylammonio)ethylphosphonate (OH-TMAEP) to yield glycine betaine and phosphate. Is highly specific for its N-trimethylated substrate. The protein is [1-hydroxy-2-(trimethylamino)ethyl]phosphonate dioxygenase (glycine-betaine-forming) of Leisingera caerulea (Phaeobacter caeruleus).